Consider the following 320-residue polypeptide: Glutathione synthetase (320 aa).

Residues 130 to 315 (KIFISWFSRF…ITGILIDYIE (186 aa)) enclose the ATP-grasp domain. ATP is bound at residue 156–212 (WKEKNDIILKPLDAMGGKGVFRIKKDDPNFSVIVETLTNYEKKYCMIQTYLPEVQFG). Mg(2+) contacts are provided by E286 and N288.

This sequence belongs to the prokaryotic GSH synthase family. Mg(2+) is required as a cofactor. The cofactor is Mn(2+).

It carries out the reaction gamma-L-glutamyl-L-cysteine + glycine + ATP = glutathione + ADP + phosphate + H(+). It functions in the pathway sulfur metabolism; glutathione biosynthesis; glutathione from L-cysteine and L-glutamate: step 2/2. The protein is Glutathione synthetase of Buchnera aphidicola subsp. Schizaphis graminum (strain Sg).